Reading from the N-terminus, the 446-residue chain is Bifunctional protein GlmU (446 aa).

The tract at residues Met1–Arg228 is pyrophosphorylase. Residues Leu9–Gly12, Lys23, Gln72, Gly77–Thr78, Tyr100–Asp102, Gly140, Glu154, Asn169, and Asn226 contribute to the UDP-N-acetyl-alpha-D-glucosamine site. A Mg(2+)-binding site is contributed by Asp102. Asn226 serves as a coordination point for Mg(2+). A linker region spans residues Ser229–Gly249. The interval Gly250–Asn446 is N-acetyltransferase. The UDP-N-acetyl-alpha-D-glucosamine site is built by Arg315 and Lys333. The Proton acceptor role is filled by His345. 2 residues coordinate UDP-N-acetyl-alpha-D-glucosamine: Tyr348 and Asn359. Residues Ala362, Asn368–Tyr369, Ser387, Ala405, and Arg422 contribute to the acetyl-CoA site.

The protein in the N-terminal section; belongs to the N-acetylglucosamine-1-phosphate uridyltransferase family. It in the C-terminal section; belongs to the transferase hexapeptide repeat family. Homotrimer. Requires Mg(2+) as cofactor.

The protein localises to the cytoplasm. The catalysed reaction is alpha-D-glucosamine 1-phosphate + acetyl-CoA = N-acetyl-alpha-D-glucosamine 1-phosphate + CoA + H(+). It carries out the reaction N-acetyl-alpha-D-glucosamine 1-phosphate + UTP + H(+) = UDP-N-acetyl-alpha-D-glucosamine + diphosphate. The protein operates within nucleotide-sugar biosynthesis; UDP-N-acetyl-alpha-D-glucosamine biosynthesis; N-acetyl-alpha-D-glucosamine 1-phosphate from alpha-D-glucosamine 6-phosphate (route II): step 2/2. It functions in the pathway nucleotide-sugar biosynthesis; UDP-N-acetyl-alpha-D-glucosamine biosynthesis; UDP-N-acetyl-alpha-D-glucosamine from N-acetyl-alpha-D-glucosamine 1-phosphate: step 1/1. It participates in bacterial outer membrane biogenesis; LPS lipid A biosynthesis. Its function is as follows. Catalyzes the last two sequential reactions in the de novo biosynthetic pathway for UDP-N-acetylglucosamine (UDP-GlcNAc). The C-terminal domain catalyzes the transfer of acetyl group from acetyl coenzyme A to glucosamine-1-phosphate (GlcN-1-P) to produce N-acetylglucosamine-1-phosphate (GlcNAc-1-P), which is converted into UDP-GlcNAc by the transfer of uridine 5-monophosphate (from uridine 5-triphosphate), a reaction catalyzed by the N-terminal domain. The chain is Bifunctional protein GlmU from Rhodospirillum rubrum (strain ATCC 11170 / ATH 1.1.1 / DSM 467 / LMG 4362 / NCIMB 8255 / S1).